Here is a 346-residue protein sequence, read N- to C-terminus: Protein-glutamate methylesterase/protein-glutamine glutaminase (346 aa).

Residues 6-123 enclose the Response regulatory domain; it reads KVLVVDDSAF…SLDLEKVRDL (118 aa). Residue aspartate 57 is modified to 4-aspartylphosphate. The 192-residue stretch at 155–346 folds into the CheB-type methylesterase domain; that stretch reads PFDKTIIVIG…ADSIVRQCKR (192 aa). Residues serine 166, histidine 193, and aspartate 289 contribute to the active site.

Belongs to the CheB family. Post-translationally, phosphorylated by CheA. Phosphorylation of the N-terminal regulatory domain activates the methylesterase activity.

It is found in the cytoplasm. The enzyme catalyses [protein]-L-glutamate 5-O-methyl ester + H2O = L-glutamyl-[protein] + methanol + H(+). It catalyses the reaction L-glutaminyl-[protein] + H2O = L-glutamyl-[protein] + NH4(+). Involved in chemotaxis. Part of a chemotaxis signal transduction system that modulates chemotaxis in response to various stimuli. Catalyzes the demethylation of specific methylglutamate residues introduced into the chemoreceptors (methyl-accepting chemotaxis proteins or MCP) by CheR. Also mediates the irreversible deamidation of specific glutamine residues to glutamic acid. This is Protein-glutamate methylesterase/protein-glutamine glutaminase from Halalkalibacterium halodurans (strain ATCC BAA-125 / DSM 18197 / FERM 7344 / JCM 9153 / C-125) (Bacillus halodurans).